A 63-amino-acid polypeptide reads, in one-letter code: Large ribosomal subunit protein uL29 (63 aa).

Belongs to the universal ribosomal protein uL29 family.

The polypeptide is Large ribosomal subunit protein uL29 (Pectobacterium atrosepticum (strain SCRI 1043 / ATCC BAA-672) (Erwinia carotovora subsp. atroseptica)).